Reading from the N-terminus, the 471-residue chain is Tyrosine--tRNA ligase (471 aa).

Residue Y41 participates in L-tyrosine binding. Residues P46–N55 carry the 'HIGH' region motif. L-tyrosine-binding residues include Y176 and Q180. Residues K236 to T240 carry the 'KMSKS' region motif. Residue K239 participates in ATP binding. An S4 RNA-binding domain is found at D403 to Y471.

This sequence belongs to the class-I aminoacyl-tRNA synthetase family. TyrS type 1 subfamily. Homodimer.

It localises to the cytoplasm. The enzyme catalyses tRNA(Tyr) + L-tyrosine + ATP = L-tyrosyl-tRNA(Tyr) + AMP + diphosphate + H(+). Its function is as follows. Catalyzes the attachment of tyrosine to tRNA(Tyr) in a two-step reaction: tyrosine is first activated by ATP to form Tyr-AMP and then transferred to the acceptor end of tRNA(Tyr). The protein is Tyrosine--tRNA ligase of Tropheryma whipplei (strain Twist) (Whipple's bacillus).